Here is a 422-residue protein sequence, read N- to C-terminus: Dihydrolipoyllysine-residue succinyltransferase component of 2-oxoglutarate dehydrogenase complex (422 aa).

In terms of domain architecture, Lipoyl-binding spans 1 to 76 (MPEVKVPELA…EVGQAIAVIG (76 aa)). Lysine 42 is modified (N6-lipoyllysine). The segment at 77 to 184 (EGSGNASKEN…APAKEEKKYN (108 aa)) is disordered. Polar residues-rich tracts occupy residues 80–94 (GNAS…TPQQ) and 114–130 (EVNQ…NATP). The Peripheral subunit-binding (PSBD) domain maps to 127–163 (NATPSARRYARENGVNLAEVSPKTNDVVRKEDIDKKQ). Residues 152–163 (DVVRKEDIDKKQ) show a composition bias toward basic and acidic residues. The segment covering 164 to 176 (QAPASTQTTQQAP) has biased composition (low complexity). Catalysis depends on residues histidine 393 and aspartate 397.

Belongs to the 2-oxoacid dehydrogenase family. In terms of assembly, forms a 24-polypeptide structural core with octahedral symmetry. Part of the 2-oxoglutarate dehydrogenase (OGDH) complex composed of E1 (2-oxoglutarate dehydrogenase), E2 (dihydrolipoamide succinyltransferase) and E3 (dihydrolipoamide dehydrogenase); the complex contains multiple copies of the three enzymatic components (E1, E2 and E3). The cofactor is (R)-lipoate.

It catalyses the reaction N(6)-[(R)-dihydrolipoyl]-L-lysyl-[protein] + succinyl-CoA = N(6)-[(R)-S(8)-succinyldihydrolipoyl]-L-lysyl-[protein] + CoA. The protein operates within amino-acid degradation; L-lysine degradation via saccharopine pathway; glutaryl-CoA from L-lysine: step 6/6. Its function is as follows. E2 component of the 2-oxoglutarate dehydrogenase (OGDH) complex which catalyzes the second step in the conversion of 2-oxoglutarate to succinyl-CoA and CO(2). In Staphylococcus aureus (strain bovine RF122 / ET3-1), this protein is Dihydrolipoyllysine-residue succinyltransferase component of 2-oxoglutarate dehydrogenase complex (odhB).